Consider the following 129-residue polypeptide: Cytochrome c oxidase subunit 5B, mitochondrial (129 aa).

A mitochondrion-targeting transit peptide spans 1 to 31 (MASRLLRGVGALASQALRARGPNGVSVVRSM). N6-acetyllysine occurs at positions 68 and 86. Residues cysteine 91, cysteine 93, cysteine 113, and cysteine 116 each contribute to the Zn(2+) site. Position 121 is an N6-acetyllysine (lysine 121).

The protein belongs to the cytochrome c oxidase subunit 5B family. As to quaternary structure, component of the cytochrome c oxidase (complex IV, CIV), a multisubunit enzyme composed of 14 subunits. The complex is composed of a catalytic core of 3 subunits MT-CO1, MT-CO2 and MT-CO3, encoded in the mitochondrial DNA, and 11 supernumerary subunits COX4I1 (or COX4I2), COX5A, COX5B, COX6A2 (or COX6A1), COX6B1 (or COX6B2), COX6C, COX7A1 (or COX7A2), COX7B, COX7C, COX8B and NDUFA4, which are encoded in the nuclear genome. The complex exists as a monomer or a dimer and forms supercomplexes (SCs) in the inner mitochondrial membrane with NADH-ubiquinone oxidoreductase (complex I, CI) and ubiquinol-cytochrome c oxidoreductase (cytochrome b-c1 complex, complex III, CIII), resulting in different assemblies (supercomplex SCI(1)III(2)IV(1) and megacomplex MCI(2)III(2)IV(2)).

It is found in the mitochondrion inner membrane. It functions in the pathway energy metabolism; oxidative phosphorylation. Its function is as follows. Component of the cytochrome c oxidase, the last enzyme in the mitochondrial electron transport chain which drives oxidative phosphorylation. The respiratory chain contains 3 multisubunit complexes succinate dehydrogenase (complex II, CII), ubiquinol-cytochrome c oxidoreductase (cytochrome b-c1 complex, complex III, CIII) and cytochrome c oxidase (complex IV, CIV), that cooperate to transfer electrons derived from NADH and succinate to molecular oxygen, creating an electrochemical gradient over the inner membrane that drives transmembrane transport and the ATP synthase. Cytochrome c oxidase is the component of the respiratory chain that catalyzes the reduction of oxygen to water. Electrons originating from reduced cytochrome c in the intermembrane space (IMS) are transferred via the dinuclear copper A center (CU(A)) of subunit 2 and heme A of subunit 1 to the active site in subunit 1, a binuclear center (BNC) formed by heme A3 and copper B (CU(B)). The BNC reduces molecular oxygen to 2 water molecules using 4 electrons from cytochrome c in the IMS and 4 protons from the mitochondrial matrix. In Bos taurus (Bovine), this protein is Cytochrome c oxidase subunit 5B, mitochondrial (COX5B).